A 308-amino-acid chain; its full sequence is S-adenosylmethionine-dependent nucleotide dehydratase (308 aa).

The Radical SAM core domain occupies 7 to 253 (SIQELVINFH…WQSYLMINPE (247 aa)). 3 residues coordinate [4Fe-4S] cluster: C21, C25, and C28.

This sequence belongs to the radical SAM superfamily. Viperin family. It depends on [4Fe-4S] cluster as a cofactor.

It catalyses the reaction CTP + AH2 + S-adenosyl-L-methionine = 3'-deoxy-3',4'-didehydro-CTP + 5'-deoxyadenosine + L-methionine + A + H2O + H(+). The enzyme catalyses GTP + AH2 + S-adenosyl-L-methionine = 3'-deoxy-3',4'-didehydro-GTP + 5'-deoxyadenosine + L-methionine + A + H2O + H(+). It carries out the reaction UTP + AH2 + S-adenosyl-L-methionine = 3'-deoxy-3',4'-didehydro-UTP + 5'-deoxyadenosine + L-methionine + A + H2O + H(+). Expression of pVip58 in E.coli (strain MG1655) confers resistance to phages lambda, P1 and T7; delays culture collapse upon infection with T7. Catalyzes the conversion of cytidine triphosphate (CTP) to 3'-deoxy-3',4'-didehydro-CTP (ddhCTP), guanosine triphosphate (GTP) to 3'-deoxy-3',4'-didehydro-GTP (ddhGTP) and uridine triphosphate (UTP) to 3'-deoxy-3',4'-didehydro-UTP (ddhUTP), probably via a SAM-dependent radical mechanism. The modified nucleotide represses transcription from T7 RNA polymerase-directed genes (possibly by acting as chain terminators), strongly suggesting these nucleotides block viral polymerase transcription. The protein is S-adenosylmethionine-dependent nucleotide dehydratase of Pseudoalteromonas ulvae.